The sequence spans 153 residues: Ubiquitin-conjugating enzyme E2 35 (153 aa).

The UBC core domain maps to 5–151 (NLPRRIIKET…AKEWTRLYAS (147 aa)). The active-site Glycyl thioester intermediate is the Cys-89.

It belongs to the ubiquitin-conjugating enzyme family. As to quaternary structure, interacts with yeast and human Mms2, with the RING domain of RGLG2 and with UEV1A, UEV1B, UEV1C and UEV1D. In terms of tissue distribution, ubiquitously expressed at low level. Mainly expressed in the vasculature.

It catalyses the reaction S-ubiquitinyl-[E1 ubiquitin-activating enzyme]-L-cysteine + [E2 ubiquitin-conjugating enzyme]-L-cysteine = [E1 ubiquitin-activating enzyme]-L-cysteine + S-ubiquitinyl-[E2 ubiquitin-conjugating enzyme]-L-cysteine.. Its pathway is protein modification; protein ubiquitination. Its function is as follows. Catalyzes the synthesis of non-canonical poly-ubiquitin chains that are linked through 'Lys-63'. This type of poly-ubiquitination does not lead to protein degradation by the proteasome. Mediates transcriptional activation of target genes. Required for postreplication repair of UV-damaged DNA and for adapting root developmental programs to suboptimal availability of iron. The protein is Ubiquitin-conjugating enzyme E2 35 (UBC35) of Arabidopsis thaliana (Mouse-ear cress).